Consider the following 95-residue polypeptide: Pyrimidine/purine nucleoside phosphorylase (95 aa).

This sequence belongs to the nucleoside phosphorylase PpnP family.

The enzyme catalyses a purine D-ribonucleoside + phosphate = a purine nucleobase + alpha-D-ribose 1-phosphate. It catalyses the reaction adenosine + phosphate = alpha-D-ribose 1-phosphate + adenine. It carries out the reaction cytidine + phosphate = cytosine + alpha-D-ribose 1-phosphate. The catalysed reaction is guanosine + phosphate = alpha-D-ribose 1-phosphate + guanine. The enzyme catalyses inosine + phosphate = alpha-D-ribose 1-phosphate + hypoxanthine. It catalyses the reaction thymidine + phosphate = 2-deoxy-alpha-D-ribose 1-phosphate + thymine. It carries out the reaction uridine + phosphate = alpha-D-ribose 1-phosphate + uracil. The catalysed reaction is xanthosine + phosphate = alpha-D-ribose 1-phosphate + xanthine. Functionally, catalyzes the phosphorolysis of diverse nucleosides, yielding D-ribose 1-phosphate and the respective free bases. Can use uridine, adenosine, guanosine, cytidine, thymidine, inosine and xanthosine as substrates. Also catalyzes the reverse reactions. The polypeptide is Pyrimidine/purine nucleoside phosphorylase (Yersinia enterocolitica serotype O:8 / biotype 1B (strain NCTC 13174 / 8081)).